Consider the following 223-residue polypeptide: ATP-dependent Clp protease proteolytic subunit 2 (223 aa).

The active-site Nucleophile is the Ser-118. Residue His-143 is part of the active site.

This sequence belongs to the peptidase S14 family. Fourteen ClpP subunits assemble into 2 heptameric rings which stack back to back to give a disk-like structure with a central cavity, resembling the structure of eukaryotic proteasomes.

It is found in the cytoplasm. The enzyme catalyses Hydrolysis of proteins to small peptides in the presence of ATP and magnesium. alpha-casein is the usual test substrate. In the absence of ATP, only oligopeptides shorter than five residues are hydrolyzed (such as succinyl-Leu-Tyr-|-NHMec, and Leu-Tyr-Leu-|-Tyr-Trp, in which cleavage of the -Tyr-|-Leu- and -Tyr-|-Trp bonds also occurs).. Functionally, cleaves peptides in various proteins in a process that requires ATP hydrolysis. Has a chymotrypsin-like activity. Plays a major role in the degradation of misfolded proteins. The polypeptide is ATP-dependent Clp protease proteolytic subunit 2 (Leifsonia xyli subsp. xyli (strain CTCB07)).